Here is a 246-residue protein sequence, read N- to C-terminus: Acetoacetate decarboxylase (246 aa).

K115 serves as the catalytic Schiff-base intermediate with acetoacetate.

This sequence belongs to the ADC family.

The enzyme catalyses acetoacetate + H(+) = acetone + CO2. Its function is as follows. Catalyzes the conversion of acetoacetate to acetone and carbon dioxide. The polypeptide is Acetoacetate decarboxylase (Clostridium beijerinckii (Clostridium MP)).